We begin with the raw amino-acid sequence, 595 residues long: Aspartate--tRNA(Asp/Asn) ligase (595 aa).

Glu-175 is an L-aspartate binding site. Residues 199–202 (QQYK) form an aspartate region. Residues Arg-221 and His-454 each contribute to the L-aspartate site. Position 221 to 223 (221 to 223 (RDE)) interacts with ATP. Position 488 (Glu-488) interacts with ATP. Arg-495 provides a ligand contact to L-aspartate. An ATP-binding site is contributed by 540-543 (GIDR).

This sequence belongs to the class-II aminoacyl-tRNA synthetase family. Type 1 subfamily. In terms of assembly, homodimer.

The protein localises to the cytoplasm. The enzyme catalyses tRNA(Asx) + L-aspartate + ATP = L-aspartyl-tRNA(Asx) + AMP + diphosphate. Aspartyl-tRNA synthetase with relaxed tRNA specificity since it is able to aspartylate not only its cognate tRNA(Asp) but also tRNA(Asn). Reaction proceeds in two steps: L-aspartate is first activated by ATP to form Asp-AMP and then transferred to the acceptor end of tRNA(Asp/Asn). The protein is Aspartate--tRNA(Asp/Asn) ligase of Sinorhizobium fredii (strain NBRC 101917 / NGR234).